Reading from the N-terminus, the 220-residue chain is UPF0502 protein VVA1225 (220 aa).

The protein belongs to the UPF0502 family.

This is UPF0502 protein VVA1225 from Vibrio vulnificus (strain YJ016).